The sequence spans 332 residues: Ketol-acid reductoisomerase (NADP(+)) 2 (332 aa).

The KARI N-terminal Rossmann domain maps to 2–182 (AELFYDADAD…GGTRAGVIRT (181 aa)). Residues 25–28 (YGSQ), Ser51, Ser53, and 83–86 (DPIQ) contribute to the NADP(+) site. The active site involves His108. Gly134 contacts NADP(+). The KARI C-terminal knotted domain occupies 183-328 (TFTEETETDL…KELRKLMSWV (146 aa)). 4 residues coordinate Mg(2+): Asp191, Glu195, Glu227, and Glu231. Substrate is bound at residue Ser252.

It belongs to the ketol-acid reductoisomerase family. Mg(2+) serves as cofactor.

The enzyme catalyses (2R)-2,3-dihydroxy-3-methylbutanoate + NADP(+) = (2S)-2-acetolactate + NADPH + H(+). The catalysed reaction is (2R,3R)-2,3-dihydroxy-3-methylpentanoate + NADP(+) = (S)-2-ethyl-2-hydroxy-3-oxobutanoate + NADPH + H(+). It participates in amino-acid biosynthesis; L-isoleucine biosynthesis; L-isoleucine from 2-oxobutanoate: step 2/4. It functions in the pathway amino-acid biosynthesis; L-valine biosynthesis; L-valine from pyruvate: step 2/4. Functionally, involved in the biosynthesis of branched-chain amino acids (BCAA). Catalyzes an alkyl-migration followed by a ketol-acid reduction of (S)-2-acetolactate (S2AL) to yield (R)-2,3-dihydroxy-isovalerate. In the isomerase reaction, S2AL is rearranged via a Mg-dependent methyl migration to produce 3-hydroxy-3-methyl-2-ketobutyrate (HMKB). In the reductase reaction, this 2-ketoacid undergoes a metal-dependent reduction by NADPH to yield (R)-2,3-dihydroxy-isovalerate. The chain is Ketol-acid reductoisomerase (NADP(+)) 2 from Streptomyces coelicolor (strain ATCC BAA-471 / A3(2) / M145).